Reading from the N-terminus, the 331-residue chain is Nacrein-like protein P1 (331 aa).

Positions 1–331 (QSPINIVSYD…LHALRNVEGY (331 aa)) constitute an Alpha-carbonic anhydrase domain. Zn(2+) is bound by residues His69, His71, and His94. The interval 138–240 (DEPDDEECKR…GENGHKHGCR (103 aa)) is disordered. Over residues 144-156 (ECKRILKGHHPDN) the composition is skewed to basic and acidic residues. Low complexity predominate over residues 157–232 (NENGNGDNGN…NNGENGNNGE (76 aa)). Repeat copies occupy residues 162–164 (GDN), 165–167 (GNN), 168–170 (GYN), 171–173 (GDN), 174–176 (GNN), 177–179 (GDN), 180–182 (GNN), 183–185 (GYN), 186–188 (GDN), 189–191 (GNN), 192–194 (GDN), 195–197 (GNN), 198–200 (GYN), 201–203 (GDN), 204–206 (GNN), 207–209 (GDN), 210–212 (GNN), 213–215 (GEN), 216–218 (GNN), 219–221 (GEN), 222–224 (GNN), 225–227 (GEN), 228–229 (GN), and 231–233 (GEN). Positions 162–233 (GDNGNNGYNG…NGENGNNGEN (72 aa)) are 24 X 3 AA approximate tandem repeats of G-X-N. Residue 298-299 (TT) coordinates substrate.

Belongs to the alpha-carbonic anhydrase family. Homooligomer; disulfide-linked. May also be disulfide-linked to insoluble organic matrix. It depends on Zn(2+) as a cofactor. In terms of tissue distribution, expressed in the mantle.

The protein localises to the secreted. It is found in the extracellular space. Its subcellular location is the extracellular matrix. The catalysed reaction is hydrogencarbonate + H(+) = CO2 + H2O. Functionally, acts as a negative regulator for calcification in the shells of mollusks. May function both as a calcium concentrator and as a carbonic anhydrase required for production of carbonate ions, which are assembled to CaCO(3) at mineralization sites. Is important for shell formation in both the calcitic prismatic layer and the aragonitic nacreous layer. Shows inhibitory activity of crystal formation when present in free state but, when attached to the insoluble matrix, may regulate the form and size of aragonite crystal. This is Nacrein-like protein P1 from Mizuhopecten yessoensis (Japanese scallop).